The sequence spans 141 residues: Sperm protein associated with the nucleus on the X chromosome N3 (141 aa).

The span at 1 to 10 (MEQPTSSTNG) shows a compositional bias: polar residues. Disordered regions lie at residues 1-47 (MEQP…TKTS) and 66-141 (NQLE…SGED). Positions 11–26 (EKTKSPCESNNKKNDE) are enriched in basic and acidic residues. The span at 66-80 (NQLENEQSQENSINP) shows a compositional bias: polar residues. Positions 84–103 (EEDEGVDLSEGSSNEDEDLG) are enriched in acidic residues. The segment covering 132-141 (EGSSQDSGED) has biased composition (polar residues).

It belongs to the SPAN-X family.

The protein is Sperm protein associated with the nucleus on the X chromosome N3 (SPANXN3) of Homo sapiens (Human).